The chain runs to 415 residues: MHSWPEPEVPQLPGEAPQLRLYDTADDVVKPVEIPAGEVGMYVCGITPYDSTHLGHAATYLTFDLIHRYLRAAGHGVHYVQNITDVDDPLFERAERDGVDWQDLGTSQIDLFRSDMEDLAVIPPRDYIGAMESIDEVIEMVAKLLEVGAAYQLEGDEYPDIYADYTFLPQFGYESRYDEQQMAEFFAERGGDPERPGKRHPMDALLWRAHREGEPKWDSPFGPGRPGWHIECSAIAVNRLGAPFAIQGGGSDLRFPHHEFSATHAEAAHGVDRMAHHYVHTGMIGLDGTKMSKSLGNLVFVSRLTAAGHEPAAIRLGVYAGHYRQDRDWTNDVLAHAEHRLASWRAALATGSTTLDEARELVATVRGHLANDLDTAAALEALDDWAADTKTGAAGDEAAASEIKTAIDALLGVRL.

Cys44 contributes to the Zn(2+) binding site. Residues 44 to 47 (CGIT), Thr59, and 82 to 84 (NIT) each bind L-cysteinyl-5'-AMP. The 'HIGH' region motif lies at 46–56 (ITPYDSTHLGH). The 'ERGGDP' region motif lies at 188-193 (ERGGDP). Trp228 serves as a coordination point for L-cysteinyl-5'-AMP. A Zn(2+)-binding site is contributed by Cys232. 250-252 (GSD) contributes to the L-cysteinyl-5'-AMP binding site. His257 is a binding site for Zn(2+). L-cysteinyl-5'-AMP is bound at residue Ile284. The 'KMSKS' region motif lies at 290-294 (KMSKS).

The protein belongs to the class-I aminoacyl-tRNA synthetase family. MshC subfamily. Monomer. The cofactor is Zn(2+).

The enzyme catalyses 1D-myo-inositol 2-amino-2-deoxy-alpha-D-glucopyranoside + L-cysteine + ATP = 1D-myo-inositol 2-(L-cysteinylamino)-2-deoxy-alpha-D-glucopyranoside + AMP + diphosphate + H(+). Its function is as follows. Catalyzes the ATP-dependent condensation of GlcN-Ins and L-cysteine to form L-Cys-GlcN-Ins. This chain is L-cysteine:1D-myo-inositol 2-amino-2-deoxy-alpha-D-glucopyranoside ligase 2, found in Corynebacterium jeikeium (strain K411).